The primary structure comprises 251 residues: HTH-type transcriptional regulator UlaR (251 aa).

One can recognise an HTH deoR-type domain in the interval 3-58 (EAQRHQILLEMLAQLGFVTVEKVVERLGISPATARRDINKLDESGKLKKVRNGAEA). Positions 20 to 39 (VTVEKVVERLGISPATARRD) form a DNA-binding region, H-T-H motif.

The protein resides in the cytoplasm. Its function is as follows. Represses ulaG and the ulaABCDEF operon. This is HTH-type transcriptional regulator UlaR from Escherichia coli O139:H28 (strain E24377A / ETEC).